The primary structure comprises 675 residues: Protein PALS1 (675 aa).

2 disordered regions span residues 1-34 (MTTS…KHRE) and 51-78 (RRSA…KKQE). The segment at 1 to 345 (MTTSHMNGHV…QQIKPPPAKE (345 aa)) is required for the correct localization of PALS1 and PATJ at cell-cell contacts and the normal formation of tight junctions and adherens junctions. 2 stretches are compositionally biased toward basic and acidic residues: residues 10–34 (VTEE…KHRE) and 54–78 (AQLE…KKQE). Residues serine 14 and serine 25 each carry the phosphoserine modification. Positions 21–140 (VDLASPEEHQ…LKHIQHTLID (120 aa)) are interaction with PARD6B. Residues serine 83 and serine 84 each carry the phosphoserine modification. 2 consecutive L27 domains span residues 120–177 (KILE…NKAS) and 179–235 (PFPL…MQLE). Residues 181-243 (PLISNAQDLA…LEPITDERVY (63 aa)) are interaction with LIN7C. Residues 256-336 (IVRIEKARDI…TLTFVLIPSQ (81 aa)) form the PDZ domain. One can recognise an SH3 domain in the interval 345 to 417 (ETVIHVKAHF…PGKSFQQQRE (73 aa)). One can recognise a Guanylate kinase-like domain in the interval 479–660 (KRPIILIGPQ…AYQELLRLIN (182 aa)). 486-493 (GPQNCGQN) serves as a coordination point for ATP.

Belongs to the MAGUK family. Heterodimer with MPP1. Forms a heterotrimeric complex composed of PALS1, LIN7B and PATJ; the N-terminal L27 domain of PALS1 interacts with the L27 domain of PATJ and the C-terminal L27 domain of PALS1 interacts with the L27 domain of LIN7B. Component of a complex composed of PALS1, CRB1 and MPP4. Component of a complex whose core is composed of ARHGAP17, AMOT, PALS1, PATJ and PARD3/PAR3. Component of a complex composed of PALS1, CRB1 and EPB41L5. Within the complex, interacts (via HOOK domain) with EPB41L5 (via FERM domain), and interacts with CRB1 (via intracellular domain). Component of a complex composed of PALS1, MPP3 and CRB1; PALS1 acts as a bridging protein between MPP3 (via guanylate kinase-like domain) and CRB1. Component of a complex composed of CRB3, PALS1 and PATJ. As part of the Crumbs complex; interacts with WWP1, the interaction is enhanced by AMOTL2 and facilitates WWP1 localization to the plasma membrane. The Crumbs complex promotes monoubiquitination of AMOTL2 by WWP1, which activates the Hippo signaling pathway. Interacts (via PDZ domain) with PATJ (via N-terminus). Interacts with EZR. Interacts (via PDZ domain) with CRB1 (via C-terminal ERLI motif). While the PDZ domain is sufficient for interaction with CRB1, the adjacent SH3 and guanylate kinase-like domains are likely to contribute to a high affinity interaction. Interacts with WWTR1/TAZ (via WW domain). Interacts with MPP7. Interacts (via PDZ domain) with CRB3 (via C-terminus). Interacts with LIN7C. Interacts with MPDZ. Interacts with PARD6B. Interacts with SC6A1. Interacts with CDH5; the interaction promotes PALS1 localization to cell junctions and is required for CDH5-mediated vascular lumen formation and endothelial cell. Interacts with NPHP1 (via coiled coil and SH3 domains). Interacts with NPHP4. Interacts with CRB2.

It is found in the golgi apparatus. It localises to the cell membrane. The protein localises to the endomembrane system. Its subcellular location is the cell junction. The protein resides in the tight junction. It is found in the adherens junction. It localises to the cell projection. The protein localises to the axon. Its subcellular location is the perikaryon. The protein resides in the apical cell membrane. Functionally, plays a role in tight junction biogenesis and in the establishment of cell polarity in epithelial cells. Also involved in adherens junction biogenesis by ensuring correct localization of the exocyst complex protein EXOC4/SEC8 which allows trafficking of adherens junction structural component CDH1 to the cell surface. Plays a role through its interaction with CDH5 in vascular lumen formation and endothelial membrane polarity. Required during embryonic and postnatal retinal development. Required for the maintenance of cerebellar progenitor cells in an undifferentiated proliferative state, preventing premature differentiation, and is required for cerebellar histogenesis, fissure formation, cerebellar layer organization and cortical development. Plays a role in neuronal progenitor cell survival, potentially via promotion of mTOR signaling. Plays a role in the radial and longitudinal extension of the myelin sheath in Schwann cells. May modulate SC6A1/GAT1-mediated GABA uptake by stabilizing the transporter. May play a role in the T-cell receptor-mediated activation of NF-kappa-B. Required for localization of EZR to the apical membrane of parietal cells and may play a role in the dynamic remodeling of the apical cytoskeleton. Required for the normal polarized localization of the vesicular marker STX4. Required for the correct trafficking of the myelin proteins PMP22 and MAG. Involved in promoting phosphorylation and cytoplasmic retention of transcriptional coactivators YAP1 and WWTR1/TAZ which leads to suppression of TGFB1-dependent transcription of target genes such as CCN2/CTGF, SERPINE1/PAI1, SNAI1/SNAIL1 and SMAD7. This Pongo abelii (Sumatran orangutan) protein is Protein PALS1.